Reading from the N-terminus, the 347-residue chain is MRIEEDLKLGFKDVLFRPKRSTLKSRSQVSLTRQFTFKHTQTQWQGVPVIAANMDTVGSFAMARTLASFEMMTAVHKHYSLAQWQTFVSETDPALLGHVMVSTGTSEDDFTKTRQILAMSSALRFICVDVANGYSQHFVEFLRKIREACPNHVILAGNVVTGEMVEELILSGADIVKVGIGPGSVCTTRVKTGVGYPQLSAIIECADAAHGLGGQIVGDGGCTCPGDVAKAFGGGADFVMLGGMLAAHEECGGEIVDVDGEPFMKFYGMSSSSAMDKHAGGVAEYRASEGKTVLLPYRGPVENTVRDILGGVRSTCTYVGASQLKELTKRTTFIRVREQENNVYGKE.

108-131 (DDFTKTRQILAMSSALRFICVDVA) serves as a coordination point for NADP(+). The K(+) site is built by Gly181 and Gly183. Cys186 (thioimidate intermediate) is an active-site residue. Residue 216–239 (IVGDGGCTCPGDVAKAFGGGADFV) participates in NADP(+) binding.

The protein belongs to the IMPDH/GMPR family. GuaC type 1 subfamily. In terms of assembly, homotetramer.

It catalyses the reaction IMP + NH4(+) + NADP(+) = GMP + NADPH + 2 H(+). Catalyzes the irreversible NADPH-dependent deamination of GMP to IMP. It functions in the conversion of nucleobase, nucleoside and nucleotide derivatives of G to A nucleotides, and in maintaining the intracellular balance of A and G nucleotides. The polypeptide is GMP reductase (Aeromonas hydrophila subsp. hydrophila (strain ATCC 7966 / DSM 30187 / BCRC 13018 / CCUG 14551 / JCM 1027 / KCTC 2358 / NCIMB 9240 / NCTC 8049)).